A 493-amino-acid polypeptide reads, in one-letter code: Vacuolar-processing enzyme (493 aa).

Positions 1–34 (MAVHRSLLNKPTWCRVAFWWWMLVMVMRIQGTNG) are cleaved as a signal peptide. Residues 35–53 (KEQDSVIKLPTQEVDAESD) constitute a propeptide that is removed on maturation. Residue histidine 176 is part of the active site. The Nucleophile role is filled by cysteine 218. Cysteine 251 and cysteine 265 form a disulfide bridge. A glycan (N-linked (GlcNAc...) asparagine) is linked at asparagine 318. Disulfide bonds link cysteine 429–cysteine 459 and cysteine 441–cysteine 476.

The protein belongs to the peptidase C13 family.

Asparagine-specific endopeptidase involved in the processing of vacuolar seed protein precursors into the mature forms. This is Vacuolar-processing enzyme from Phaseolus vulgaris (Kidney bean).